Consider the following 101-residue polypeptide: NAD(P)H-quinone oxidoreductase subunit 4L, chloroplastic (101 aa).

Helical transmembrane passes span 2–22, 32–52, and 61–81; these read MLEH…YGLI, MCLE…SDFF, and IFSI…SAIV.

Belongs to the complex I subunit 4L family. As to quaternary structure, NDH is composed of at least 16 different subunits, 5 of which are encoded in the nucleus.

It localises to the plastid. The protein localises to the chloroplast thylakoid membrane. It catalyses the reaction a plastoquinone + NADH + (n+1) H(+)(in) = a plastoquinol + NAD(+) + n H(+)(out). It carries out the reaction a plastoquinone + NADPH + (n+1) H(+)(in) = a plastoquinol + NADP(+) + n H(+)(out). In terms of biological role, NDH shuttles electrons from NAD(P)H:plastoquinone, via FMN and iron-sulfur (Fe-S) centers, to quinones in the photosynthetic chain and possibly in a chloroplast respiratory chain. The immediate electron acceptor for the enzyme in this species is believed to be plastoquinone. Couples the redox reaction to proton translocation, and thus conserves the redox energy in a proton gradient. This chain is NAD(P)H-quinone oxidoreductase subunit 4L, chloroplastic, found in Citrus sinensis (Sweet orange).